The following is a 562-amino-acid chain: Matrix metalloproteinase-25 (562 aa).

An N-terminal signal peptide occupies residues 1–21 (MRLRLRLLALLLLLLAPPARA). The propeptide occupies 22-107 (PKPSAQDVSL…VAGLVRRRRR (86 aa)). The Cysteine switch motif lies at 88–95 (PRCSLPDV). 2 residues coordinate Zn(2+): C90 and H233. E234 is a catalytic residue. The Zn(2+) site is built by H237 and H243. The tract at residues 278–313 (LYGKAPQTPYDKPTRKPLAPPPQPPASPTHSPSFPI) is disordered. Residues 295-304 (LAPPPQPPAS) are compositionally biased toward pro residues. 4 Hemopexin repeats span residues 314–363 (PDRC…WEGL), 367–412 (VRVV…GLPP), 413–461 (GEEV…EGAP), and 462–508 (PSPD…WLDC). C317 and C508 are oxidised to a cystine. The segment at 490–526 (SIKTEPDAPQPMGPNWLDCPAPSSGPRAPRPPKATPV) is disordered. A539 is lipidated: GPI-anchor amidated alanine. A propeptide spans 540–562 (AGRWPAPIPLLLLPLLVGGVASR) (removed in mature form).

It belongs to the peptidase M10A family. Requires Zn(2+) as cofactor. Ca(2+) serves as cofactor. The precursor is cleaved by a furin endopeptidase. In terms of tissue distribution, expressed predominantly in leukocytes, lung and spleen. Expressed also in colon carcinoma, astrocytoma and glioblastomas.

The protein resides in the cell membrane. It is found in the secreted. Its subcellular location is the extracellular space. It localises to the extracellular matrix. May activate progelatinase A. This Homo sapiens (Human) protein is Matrix metalloproteinase-25 (MMP25).